A 122-amino-acid chain; its full sequence is Cytochrome b-c1 complex subunit 7-2, mitochondrial (122 aa).

This sequence belongs to the UQCRB/QCR7 family. As to quaternary structure, component of the ubiquinol-cytochrome c oxidoreductase (cytochrome b-c1 complex, complex III, CIII), a multisubunit enzyme composed of 10 subunits. The complex is composed of 3 respiratory subunits cytochrome b (MT-CYB), cytochrome c1 (CYC1-1 or CYC1-2) and Rieske protein (UCR1-1 or UCR1-2), 2 core protein subunits MPPalpha1 (or MPPalpha2) and MPPB, and 5 low-molecular weight protein subunits QCR7-1 (or QCR7-2), UCRQ-1 (or UCRQ-2), QCR9, UCRY and probably QCR6-1 (or QCR6-2). The complex exists as an obligatory dimer and forms supercomplexes (SCs) in the inner mitochondrial membrane with NADH-ubiquinone oxidoreductase (complex I, CI), resulting in different assemblies (supercomplexes SCI(1)III(2) and SCI(2)III(4)).

It localises to the mitochondrion inner membrane. Component of the ubiquinol-cytochrome c oxidoreductase, a multisubunit transmembrane complex that is part of the mitochondrial electron transport chain which drives oxidative phosphorylation. The respiratory chain contains 3 multisubunit complexes succinate dehydrogenase (complex II, CII), ubiquinol-cytochrome c oxidoreductase (cytochrome b-c1 complex, complex III, CIII) and cytochrome c oxidase (complex IV, CIV), that cooperate to transfer electrons derived from NADH and succinate to molecular oxygen, creating an electrochemical gradient over the inner membrane that drives transmembrane transport and the ATP synthase. The cytochrome b-c1 complex catalyzes electron transfer from ubiquinol to cytochrome c, linking this redox reaction to translocation of protons across the mitochondrial inner membrane, with protons being carried across the membrane as hydrogens on the quinol. In the process called Q cycle, 2 protons are consumed from the matrix, 4 protons are released into the intermembrane space and 2 electrons are passed to cytochrome c. The sequence is that of Cytochrome b-c1 complex subunit 7-2, mitochondrial (QCR7-2) from Arabidopsis thaliana (Mouse-ear cress).